Here is a 91-residue protein sequence, read N- to C-terminus: Ribonuclease P protein component 4 (91 aa).

4 residues coordinate Zn(2+): cysteine 55, cysteine 58, cysteine 78, and cysteine 81.

It belongs to the eukaryotic/archaeal RNase P protein component 4 family. In terms of assembly, consists of a catalytic RNA component and at least 4-5 protein subunits. It depends on Zn(2+) as a cofactor.

The protein resides in the cytoplasm. The catalysed reaction is Endonucleolytic cleavage of RNA, removing 5'-extranucleotides from tRNA precursor.. In terms of biological role, part of ribonuclease P, a protein complex that generates mature tRNA molecules by cleaving their 5'-ends. This Thermoplasma acidophilum (strain ATCC 25905 / DSM 1728 / JCM 9062 / NBRC 15155 / AMRC-C165) protein is Ribonuclease P protein component 4.